Here is a 137-residue protein sequence, read N- to C-terminus: Small ribosomal subunit protein uS9c (137 aa).

Belongs to the universal ribosomal protein uS9 family.

The protein resides in the plastid. It is found in the chloroplast. The polypeptide is Small ribosomal subunit protein uS9c (rps9) (Chlorella vulgaris (Green alga)).